The chain runs to 147 residues: Hemoglobin subunit delta (147 aa).

One can recognise a Globin domain in the interval 3 to 147 (NLTAAEKTQV…VANALAHKYH (145 aa)). Histidine 64 and histidine 93 together coordinate heme b.

Belongs to the globin family. Heterotetramer of two delta chains and two alpha chains. Red blood cells.

The chain is Hemoglobin subunit delta (HBD) from Loxodonta africana (African elephant).